A 358-amino-acid chain; its full sequence is Peptide chain release factor 1 (358 aa).

Residue Gln-234 is modified to N5-methylglutamine.

Belongs to the prokaryotic/mitochondrial release factor family. In terms of processing, methylated by PrmC. Methylation increases the termination efficiency of RF1.

It is found in the cytoplasm. Peptide chain release factor 1 directs the termination of translation in response to the peptide chain termination codons UAG and UAA. The protein is Peptide chain release factor 1 of Leifsonia xyli subsp. xyli (strain CTCB07).